The following is a 211-amino-acid chain: Protein-L-isoaspartate O-methyltransferase (211 aa).

Ser62 is a catalytic residue.

The protein belongs to the methyltransferase superfamily. L-isoaspartyl/D-aspartyl protein methyltransferase family.

The protein resides in the cytoplasm. The catalysed reaction is [protein]-L-isoaspartate + S-adenosyl-L-methionine = [protein]-L-isoaspartate alpha-methyl ester + S-adenosyl-L-homocysteine. Catalyzes the methyl esterification of L-isoaspartyl residues in peptides and proteins that result from spontaneous decomposition of normal L-aspartyl and L-asparaginyl residues. It plays a role in the repair and/or degradation of damaged proteins. This is Protein-L-isoaspartate O-methyltransferase from Shewanella denitrificans (strain OS217 / ATCC BAA-1090 / DSM 15013).